The chain runs to 946 residues: Serine/threonine-protein kinase PLK4 (946 aa).

Residues 12 to 265 enclose the Protein kinase domain; that stretch reads FKVLNLLGKG…LSSVLDHAFM (254 aa). ATP-binding positions include 18–26 and Lys41; that span reads LGKGSFACV. Asp136 acts as the Proton acceptor in catalysis. Positions 330–395 are disordered; it reads HPAERSNGGS…TYGKPSSFSE (66 aa). Polar residues predominate over residues 378 to 394; it reads RSGTSQSQTYGKPSSFS. Residues 566–679 form the Cryptic POLO box 1 (CPB1) domain; sequence TLRSIISPLN…AKFIQLVRSK (114 aa). The Cryptic POLO box 2 (CPB2) domain maps to 680 to 792; the sequence is MPKVTYYTRY…GRRPAITESP (113 aa). Residues 789 to 828 form a disordered region; sequence TESPRTQLTVDSARERKDEQSSANRVLHSSATSPPQIPNI. Residues 809-828 are compositionally biased toward polar residues; sequence SSANRVLHSSATSPPQIPNI. Residues 864-942 enclose the POLO box domain; the sequence is QVLKSVFVEN…LSSILMLFAS (79 aa).

The protein belongs to the protein kinase superfamily. Ser/Thr protein kinase family. CDC5/Polo subfamily. Homodimer. Ubiquitinated; leading to its degradation by the proteasome.

The protein resides in the cytoplasm. Its subcellular location is the cytoskeleton. It localises to the microtubule organizing center. The protein localises to the centrosome. It is found in the centriole. It carries out the reaction L-seryl-[protein] + ATP = O-phospho-L-seryl-[protein] + ADP + H(+). The enzyme catalyses L-threonyl-[protein] + ATP = O-phospho-L-threonyl-[protein] + ADP + H(+). Serine/threonine-protein kinase that plays a central role in centriole duplication. Able to trigger procentriole formation on the surface of the parental centriole cylinder, leading to the recruitment of centriole biogenesis proteins such as sass6, cpap, ccp110, cep135 and gamma-tubulin. When overexpressed, it is able to induce centrosome amplification through the simultaneous generation of multiple procentrioles adjoining each parental centriole during S phase. Its central role in centriole replication suggests a possible role in tumorigenesis, centrosome aberrations being frequently observed in tumors. Also involved in deuterosome-mediated centriole amplification in multiciliated that can generate more than 100 centrioles. In Xenopus tropicalis (Western clawed frog), this protein is Serine/threonine-protein kinase PLK4.